A 157-amino-acid chain; its full sequence is Lipoprotein signal peptidase (157 aa).

4 helical membrane-spanning segments follow: residues 10 to 30, 36 to 56, 58 to 78, and 84 to 104; these read LVFIGVFFLIFGVDQAIKHAI, YESLMIDIVLVFNKGVAFSLL, FLEGGLKYLQILLILGLFIFL, and LFKNHAIEFGMVFGAGVSNVL. Catalysis depends on residues aspartate 114 and aspartate 131. Residues 122–142 form a helical membrane-spanning segment; it reads FDFAIFNFADVMIDVGVGVLL.

This sequence belongs to the peptidase A8 family.

The protein resides in the cell inner membrane. The catalysed reaction is Release of signal peptides from bacterial membrane prolipoproteins. Hydrolyzes -Xaa-Yaa-Zaa-|-(S,diacylglyceryl)Cys-, in which Xaa is hydrophobic (preferably Leu), and Yaa (Ala or Ser) and Zaa (Gly or Ala) have small, neutral side chains.. The protein operates within protein modification; lipoprotein biosynthesis (signal peptide cleavage). This protein specifically catalyzes the removal of signal peptides from prolipoproteins. The chain is Lipoprotein signal peptidase from Helicobacter pylori (strain P12).